Consider the following 391-residue polypeptide: Formate-dependent phosphoribosylglycinamide formyltransferase (391 aa).

N(1)-(5-phospho-beta-D-ribosyl)glycinamide is bound by residues 20-21 (EL) and Glu80. ATP is bound by residues Arg112, Lys153, 158 to 163 (SSGKGQ), 193 to 196 (EGFI), and Glu201. Residues 117–306 (RLAAEELDLS…EFALHVRAFT (190 aa)) form the ATP-grasp domain. The Mg(2+) site is built by Glu265 and Glu277. N(1)-(5-phospho-beta-D-ribosyl)glycinamide is bound by residues Asp284, Lys354, and 361–362 (RR).

It belongs to the PurK/PurT family. Homodimer.

The enzyme catalyses N(1)-(5-phospho-beta-D-ribosyl)glycinamide + formate + ATP = N(2)-formyl-N(1)-(5-phospho-beta-D-ribosyl)glycinamide + ADP + phosphate + H(+). It participates in purine metabolism; IMP biosynthesis via de novo pathway; N(2)-formyl-N(1)-(5-phospho-D-ribosyl)glycinamide from N(1)-(5-phospho-D-ribosyl)glycinamide (formate route): step 1/1. Functionally, involved in the de novo purine biosynthesis. Catalyzes the transfer of formate to 5-phospho-ribosyl-glycinamide (GAR), producing 5-phospho-ribosyl-N-formylglycinamide (FGAR). Formate is provided by PurU via hydrolysis of 10-formyl-tetrahydrofolate. The polypeptide is Formate-dependent phosphoribosylglycinamide formyltransferase (Vibrio parahaemolyticus serotype O3:K6 (strain RIMD 2210633)).